A 199-amino-acid polypeptide reads, in one-letter code: FMN-dependent NADH:quinone oxidoreductase 2 (199 aa).

FMN is bound by residues serine 10, 16 to 18 (SVS), and 96 to 99 (MYNF).

This sequence belongs to the azoreductase type 1 family. As to quaternary structure, homodimer. The cofactor is FMN.

The catalysed reaction is 2 a quinone + NADH + H(+) = 2 a 1,4-benzosemiquinone + NAD(+). The enzyme catalyses N,N-dimethyl-1,4-phenylenediamine + anthranilate + 2 NAD(+) = 2-(4-dimethylaminophenyl)diazenylbenzoate + 2 NADH + 2 H(+). Functionally, quinone reductase that provides resistance to thiol-specific stress caused by electrophilic quinones. In terms of biological role, also exhibits azoreductase activity. Catalyzes the reductive cleavage of the azo bond in aromatic azo compounds to the corresponding amines. The sequence is that of FMN-dependent NADH:quinone oxidoreductase 2 from Pseudomonas putida (strain ATCC 47054 / DSM 6125 / CFBP 8728 / NCIMB 11950 / KT2440).